We begin with the raw amino-acid sequence, 151 residues long: Acidic phospholipase A2 5 (151 aa).

Residues M1 to L27 form the signal peptide. 7 cysteine pairs are disulfide-bonded: C38-C104, C54-C151, C56-C72, C71-C132, C78-C125, C88-C118, and C111-C123. Residues Y55, G57, and G59 each contribute to the Ca(2+) site. H75 is an active-site residue. Position 76 (D76) interacts with Ca(2+). The active site involves D126.

The protein belongs to the phospholipase A2 family. Group I subfamily. D49 sub-subfamily. Ca(2+) serves as cofactor. In terms of tissue distribution, expressed by the venom gland.

It localises to the secreted. It carries out the reaction a 1,2-diacyl-sn-glycero-3-phosphocholine + H2O = a 1-acyl-sn-glycero-3-phosphocholine + a fatty acid + H(+). Functionally, PLA2 catalyzes the calcium-dependent hydrolysis of the 2-acyl groups in 3-sn-phosphoglycerides. This is Acidic phospholipase A2 5 from Tropidechis carinatus (Australian rough-scaled snake).